A 492-amino-acid polypeptide reads, in one-letter code: La-related protein 6 (492 aa).

The disordered stretch occupies residues Met-1–Pro-87. An N-acetylalanine modification is found at Ala-2. The span at Glu-24 to Gly-37 shows a compositional bias: acidic residues. A phosphoserine mark is found at Ser-56 and Ser-58. Residues Gly-65 to Gly-74 are compositionally biased toward polar residues. An HTH La-type RNA-binding domain is found at Arg-86–Pro-177. The 113-residue stretch at Lys-184–Pro-296 folds into the RRM domain. A Nuclear export signal motif is present at residues Leu-186–Leu-193. Disordered stretches follow at residues Gly-292–Leu-398 and Val-466–Val-492. The Nuclear localization signal motif lies at Pro-296–Lys-302. A compositionally biased stretch (low complexity) spans Asp-332–Pro-346. Over residues Asn-359–Leu-386 the composition is skewed to polar residues. The SUZ-C domain occupies Pro-427–His-485. Residues Gly-483 to Val-492 are compositionally biased toward basic and acidic residues.

Interacts (via the HTH domain) with VIM/vimentin. Interacts (via C-terminus) with non-muscle myosin MYH10. Interacts (via C-terminus) with DHX9. Expressed in numerous tissues. Highest expression in heart and brain, intermediate in kidney, skeletal muscle and testis, lowest expression in testis (at protein level).

It localises to the cytoplasm. It is found in the nucleus. Functionally, regulates the coordinated translation of type I collagen alpha-1 and alpha-2 mRNAs, CO1A1 and CO1A2. Stabilizes mRNAs through high-affinity binding of a stem-loop structure in their 5' UTR. This regulation requires VIM and MYH10 filaments, and the helicase DHX9. In Mus musculus (Mouse), this protein is La-related protein 6 (Larp6).